We begin with the raw amino-acid sequence, 511 residues long: Histidine ammonia-lyase (511 aa).

The 5-imidazolinone (Ala-Gly) cross-link spans 142 to 144 (ASG). Residue serine 143 is modified to 2,3-didehydroalanine (Ser).

It belongs to the PAL/histidase family. Contains an active site 4-methylidene-imidazol-5-one (MIO), which is formed autocatalytically by cyclization and dehydration of residues Ala-Ser-Gly.

The protein resides in the cytoplasm. It catalyses the reaction L-histidine = trans-urocanate + NH4(+). The protein operates within amino-acid degradation; L-histidine degradation into L-glutamate; N-formimidoyl-L-glutamate from L-histidine: step 1/3. The sequence is that of Histidine ammonia-lyase from Rhizobium rhizogenes (strain K84 / ATCC BAA-868) (Agrobacterium radiobacter).